We begin with the raw amino-acid sequence, 494 residues long: Glutamate decarboxylase 2 (494 aa).

Residue K276 is modified to N6-(pyridoxal phosphate)lysine. Residues 463-494 (VKEKKMEKEILMEVIVGWRKFVKERKKMNGVC) form a calmodulin-binding region.

It belongs to the group II decarboxylase family. In terms of assembly, homohexamer. Interacts with calmodulin. Pyridoxal 5'-phosphate serves as cofactor. Expressed in roots, inflorescence stems, flowers, siliques and leaves.

It carries out the reaction L-glutamate + H(+) = 4-aminobutanoate + CO2. Its activity is regulated as follows. Up-regulated by calmodulin binding at physiological pH. Functionally, catalyzes the conversion of glutamate to 4-aminobutanoate (GABA). The calmodulin-binding is calcium-dependent and it is proposed to directly or indirectly form a calcium regulated control of GABA biosynthesis. The sequence is that of Glutamate decarboxylase 2 (GAD2) from Arabidopsis thaliana (Mouse-ear cress).